A 261-amino-acid polypeptide reads, in one-letter code: Small ribosomal subunit protein uS2 (261 aa).

Belongs to the universal ribosomal protein uS2 family.

This chain is Small ribosomal subunit protein uS2, found in Thermodesulfovibrio yellowstonii (strain ATCC 51303 / DSM 11347 / YP87).